The following is an 87-amino-acid chain: DNA polymerase epsilon subunit C (87 aa).

As to quaternary structure, DNA polymerase epsilon is a heterotetramer consisting of cdc20/Pol2, dpb2, dpb3, and dpb4. Also forms a heterodimer consisting dpb3 and dpb4. Interacts directly with cdc20/pol2 and dpb4.

It is found in the nucleus. In terms of biological role, as accessory component of the DNA polymerase epsilon (DNA polymerase II) participates in chromosomal DNA replication. It is required during synthesis of the leading and lagging DNA strands at the replication fork and binds at/or near replication origins and moves along DNA with the replication fork. It has 3'-5' proofreading exonuclease activity that correct errors arising during DNA replication. It is also involved in DNA synthesis during DNA repair. The dpb3-dpb4 dimer associates with histone deacetylases, chromatin remodelers, and histones and plays a crucial role in the inheritance of histone hypoacetylation and H3K9 methylation in heterochromatin. The dpb3-dpb4 dimer is also required for the recruitment of sir2 to heterochromatin. The chain is DNA polymerase epsilon subunit C from Schizosaccharomyces pombe (strain 972 / ATCC 24843) (Fission yeast).